Reading from the N-terminus, the 539-residue chain is Putative cysteine ligase BshC (539 aa).

Positions L455 to K475 form a coiled coil.

The protein belongs to the BshC family.

Functionally, involved in bacillithiol (BSH) biosynthesis. May catalyze the last step of the pathway, the addition of cysteine to glucosamine malate (GlcN-Mal) to generate BSH. The polypeptide is Putative cysteine ligase BshC (Bacillus velezensis (strain DSM 23117 / BGSC 10A6 / LMG 26770 / FZB42) (Bacillus amyloliquefaciens subsp. plantarum)).